We begin with the raw amino-acid sequence, 301 residues long: Rhodopsin (301 aa).

At 1-18 the chain is on the extracellular side; it reads LHMIHLHWYQYPPMNPMM. Residues 19–43 traverse the membrane as a helical segment; sequence YPLLLIFMLFTGILCLAGNFVTIWV. At 44-55 the chain is on the cytoplasmic side; sequence FMNTKSLRTPAN. A helical transmembrane segment spans residues 56–78; sequence LLVVNLAMSDFLMMFTMFPPMMV. At 79–92 the chain is on the extracellular side; that stretch reads TCYYHTWTLGPTFC. C92 and C169 form a disulfide bridge. A helical transmembrane segment spans residues 93–115; the sequence is QVYAFLGNLCGCASIWTMVFITF. The 'Ionic lock' involved in activated form stabilization signature appears at 116 to 118; sequence DRY. The Cytoplasmic portion of the chain corresponds to 116-134; it reads DRYNVIVKGVAGEPLSNKK. Residues 135–155 form a helical membrane-spanning segment; sequence AAMWILSVWVLSTAWCMAPFF. At 156–182 the chain is on the extracellular side; it reads GWNSYVPEGNLTGCGTDYLSEDILSRS. A glycan (N-linked (GlcNAc...) asparagine) is linked at N165. Residues 183-204 traverse the membrane as a helical segment; the sequence is YLYIYSTWVYFLPLTITIYCYV. Over 205–245 the chain is Cytoplasmic; sequence FIIKAVAAHEKGMRDQAKKMGIKSLRNEEAQKTSAECRLAK. Residues 246 to 267 form a helical membrane-spanning segment; the sequence is IAMTTVALWFIAWTPYLLINWV. The Extracellular segment spans residues 268–278; that stretch reads GMFARSYLSPV. The chain crosses the membrane as a helical span at residues 279–300; it reads YTIWGYVFAKANAVYNPIVYAI. K288 is modified (N6-(retinylidene)lysine).

The protein belongs to the G-protein coupled receptor 1 family. Opsin subfamily. In terms of assembly, homodimer. Interacts with GNAQ. Contains one covalently linked retinal chromophore.

It localises to the cell projection. Its subcellular location is the rhabdomere membrane. Its function is as follows. Photoreceptor required for image-forming vision at low light intensity. Can use both retinal and 3-dehydroretinal as visual pigment. Light-induced isomerization of 11-cis to all-trans retinal triggers a conformational change that activates signaling via G-proteins. Signaling via GNAQ probably mediates the activation of phospholipase C. This is Rhodopsin (RHO) from Faxonius virilis (Virile crayfish).